The primary structure comprises 295 residues: MQTYLQKYWNYLRNERQVSSYTLTNYQRQMDAVMKILQENDIQNWRQVSPSVVRFILAQSKKSGLHEKSLALRLSALRQFLAFLVLQGELKVNPAIGISAPKQGKHLPKNINAEQLNKLLDNNSKEPIDLRDKAMLELMYSSGLRLSELQGLNLTSLNFRSREIRVLGKGNKERILPFGRHASHSVQEWLKVRLLFNPKDDALFVSSLGNRMSNRSIQKRMEIWGVRQGLNSHLNPHKLRHSFATQMLEASSDLRAVQELLGHSNLSTTQIYTHLNFQHLAEVYDQAHPRAKRRK.

The Core-binding (CB) domain maps to 1–85 (MQTYLQKYWN…ALRQFLAFLV (85 aa)). Positions 106–285 (HLPKNINAEQ…NFQHLAEVYD (180 aa)) constitute a Tyr recombinase domain. Catalysis depends on residues Arg-145, Lys-169, His-237, Arg-240, and His-263. Tyr-272 acts as the O-(3'-phospho-DNA)-tyrosine intermediate in catalysis.

It belongs to the 'phage' integrase family. XerC subfamily. As to quaternary structure, forms a cyclic heterotetrameric complex composed of two molecules of XerC and two molecules of XerD.

It localises to the cytoplasm. Its function is as follows. Site-specific tyrosine recombinase, which acts by catalyzing the cutting and rejoining of the recombining DNA molecules. The XerC-XerD complex is essential to convert dimers of the bacterial chromosome into monomers to permit their segregation at cell division. It also contributes to the segregational stability of plasmids. The polypeptide is Tyrosine recombinase XerC (Mannheimia succiniciproducens (strain KCTC 0769BP / MBEL55E)).